A 646-amino-acid polypeptide reads, in one-letter code: Probable lysosomal cobalamin transporter (646 aa).

Transmembrane regions (helical) follow at residues 11–31 (LIWVAYGVAVALVLLVSVITT), 42–62 (IAVSIVSIISLTALLATVFLL), 102–122 (TLYTLDALLCLIVIPFTYFWF), 149–169 (LGFVFLVVILFLIGFFVPAAG), and 193–213 (ALTFGVGLLITLGTLLYILYT). The N-linked (GlcNAc...) asparagine glycan is linked to Asn-297. Transmembrane regions (helical) follow at residues 317 to 337 (LLGGIFLLLLAILIWVSMLIT) and 380 to 400 (ILMALLVLLFFSSSITGLATI). Disordered stretches follow at residues 459–588 (QPAA…PPRR) and 603–623 (VGRARGVKLNGGAATENDKKE). Low complexity-rich tracts occupy residues 460–490 (PAAATRASSPTAASTATWCAPAPRPSASPAA) and 517–543 (PSTSGPSSSSSPSSSSSSSPASSRTPR). Asn-545 carries N-linked (GlcNAc...) asparagine glycosylation. Positions 565 to 582 (APAAALARPGAISPAAPR) are enriched in low complexity. Asn-626 is a glycosylation site (N-linked (GlcNAc...) asparagine).

Belongs to the LIMR family. LMBRD1 subfamily.

It is found in the lysosome membrane. Functionally, probable lysosomal cobalamin transporter. Required to export cobalamin from lysosomes allowing its conversion to cofactors. The sequence is that of Probable lysosomal cobalamin transporter from Chaetomium globosum (strain ATCC 6205 / CBS 148.51 / DSM 1962 / NBRC 6347 / NRRL 1970) (Soil fungus).